We begin with the raw amino-acid sequence, 514 residues long: Histidine ammonia-lyase (514 aa).

The segment at residues 144–146 (ASG) is a cross-link (5-imidazolinone (Ala-Gly)). A 2,3-didehydroalanine (Ser) modification is found at Ser-145.

The protein belongs to the PAL/histidase family. Contains an active site 4-methylidene-imidazol-5-one (MIO), which is formed autocatalytically by cyclization and dehydration of residues Ala-Ser-Gly.

The protein resides in the cytoplasm. The enzyme catalyses L-histidine = trans-urocanate + NH4(+). It participates in amino-acid degradation; L-histidine degradation into L-glutamate; N-formimidoyl-L-glutamate from L-histidine: step 1/3. The chain is Histidine ammonia-lyase from Rhodospirillum rubrum (strain ATCC 11170 / ATH 1.1.1 / DSM 467 / LMG 4362 / NCIMB 8255 / S1).